We begin with the raw amino-acid sequence, 562 residues long: Glutamate--tRNA ligase (562 aa).

The 'HIGH' region motif lies at 90–100 (PNPSGLLHIGH).

Belongs to the class-I aminoacyl-tRNA synthetase family. Glutamate--tRNA ligase type 2 subfamily.

It localises to the cytoplasm. The catalysed reaction is tRNA(Glu) + L-glutamate + ATP = L-glutamyl-tRNA(Glu) + AMP + diphosphate. Functionally, catalyzes the attachment of glutamate to tRNA(Glu) in a two-step reaction: glutamate is first activated by ATP to form Glu-AMP and then transferred to the acceptor end of tRNA(Glu). The chain is Glutamate--tRNA ligase from Nanoarchaeum equitans (strain Kin4-M).